Consider the following 388-residue polypeptide: Xylose isomerase (388 aa).

Residues histidine 54 and aspartate 57 contribute to the active site. 7 residues coordinate Mg(2+): glutamate 181, glutamate 217, histidine 220, aspartate 245, aspartate 255, aspartate 257, and aspartate 287.

The protein belongs to the xylose isomerase family. In terms of assembly, homotetramer. Requires Mg(2+) as cofactor.

Its subcellular location is the cytoplasm. It catalyses the reaction alpha-D-xylose = alpha-D-xylulofuranose. This is Xylose isomerase from Streptomyces avermitilis (strain ATCC 31267 / DSM 46492 / JCM 5070 / NBRC 14893 / NCIMB 12804 / NRRL 8165 / MA-4680).